A 354-amino-acid polypeptide reads, in one-letter code: Ornithine carbamoyltransferase, catabolic (354 aa).

Carbamoyl phosphate is bound by residues 67 to 70 (STRT), glutamine 94, arginine 118, and 145 to 148 (HPTQ). Residues asparagine 177, aspartate 241, and 245-246 (SM) each bind L-ornithine. Residues 284–285 (CL) and arginine 329 each bind carbamoyl phosphate.

It belongs to the aspartate/ornithine carbamoyltransferase superfamily. OTCase family.

The protein resides in the cytoplasm. It carries out the reaction carbamoyl phosphate + L-ornithine = L-citrulline + phosphate + H(+). It functions in the pathway amino-acid degradation; L-arginine degradation via ADI pathway; carbamoyl phosphate from L-arginine: step 2/2. Functionally, reversibly catalyzes the transfer of the carbamoyl group from carbamoyl phosphate (CP) to the N(epsilon) atom of ornithine (ORN) to produce L-citrulline. This chain is Ornithine carbamoyltransferase, catabolic (arcB), found in Lactococcus lactis subsp. lactis (strain IL1403) (Streptococcus lactis).